The primary structure comprises 818 residues: Phenylalanine--tRNA ligase beta subunit (818 aa).

In terms of domain architecture, tRNA-binding spans 39 to 148 (AAELQKFEVA…EDAVVGENFT (110 aa)). A B5 domain is found at 423-498 (SQKKPLDFSA…RIYGYDKIES (76 aa)). Mg(2+)-binding residues include Asp476, Asp482, Glu485, and Glu486. One can recognise an FDX-ACB domain in the interval 724–817 (SDFQANFRDY…ISQKFQGTLR (94 aa)).

Belongs to the phenylalanyl-tRNA synthetase beta subunit family. Type 1 subfamily. Tetramer of two alpha and two beta subunits. The cofactor is Mg(2+).

The protein localises to the cytoplasm. It carries out the reaction tRNA(Phe) + L-phenylalanine + ATP = L-phenylalanyl-tRNA(Phe) + AMP + diphosphate + H(+). The chain is Phenylalanine--tRNA ligase beta subunit from Rickettsia conorii (strain ATCC VR-613 / Malish 7).